Here is a 189-residue protein sequence, read N- to C-terminus: Ion-translocating oxidoreductase complex subunit B (189 aa).

The hydrophobic stretch occupies residues 1 to 26 (MSQVIIAIILLGLLALAFGALLGYAA). The region spanning 32 to 90 (EGDPIIDQAEALLPQTQCGQCGYPGCRPYAEAIANGEKINKCPPGGTATMEKLAELMGV) is the 4Fe-4S domain. [4Fe-4S] cluster-binding residues include C49, C52, C57, C73, C114, C117, C120, C124, C144, C147, C150, and C154. 2 consecutive 4Fe-4S ferredoxin-type domains span residues 105-134 (KVAF…GTGK) and 135-164 (QMHT…MIPV).

It belongs to the 4Fe4S bacterial-type ferredoxin family. RnfB subfamily. In terms of assembly, the complex is composed of six subunits: RnfA, RnfB, RnfC, RnfD, RnfE and RnfG. [4Fe-4S] cluster is required as a cofactor.

The protein resides in the cell inner membrane. In terms of biological role, part of a membrane-bound complex that couples electron transfer with translocation of ions across the membrane. The sequence is that of Ion-translocating oxidoreductase complex subunit B from Shewanella loihica (strain ATCC BAA-1088 / PV-4).